The following is a 625-amino-acid chain: Sorting nexin-41 (625 aa).

The disordered stretch occupies residues 1–90 (MDYNIFEAVH…STSSHAVVEA (90 aa)). A compositionally biased stretch (low complexity) spans 54 to 86 (SPPSSSSLPSSPAHSSSAGSSRASTSSSTSSHA). One can recognise a PX domain in the interval 98-235 (VSLSMSTTAT…QKFLNPEFNW (138 aa)). A 1,2-diacyl-sn-glycero-3-phospho-(1D-myo-inositol-3-phosphate)-binding residues include R153, S155, K179, and R202. Coiled-coil stretches lie at residues 437 to 469 (QFKI…NESL) and 539 to 563 (QLTE…KDCL).

It belongs to the sorting nexin family. In terms of assembly, binds to SNX4.

Its subcellular location is the prevacuolar compartment. It localises to the endosome. The protein localises to the endosome membrane. Its function is as follows. Involved in proper sorting of the v-SNARE protein SNC1. In Saccharomyces cerevisiae (strain ATCC 204508 / S288c) (Baker's yeast), this protein is Sorting nexin-41 (SNX41).